Consider the following 64-residue polypeptide: PYLa/PGLa A (64 aa).

The N-terminal stretch at 1–20 (MYKQIFLCLIIAALCATIMA) is a signal peptide. Residues 21 to 35 (EASAFADADEDDDKR) constitute a propeptide that is removed on maturation. Leu-59 is modified (leucine amide). Positions 60 to 64 (GRRDS) are excised as a propeptide.

The protein belongs to the gastrin/cholecystokinin family. Magainin subfamily. In terms of tissue distribution, expressed by the skin glands. Synthesized in the stomach and stored in a novel granular multinucleated cell in the gastric mucosa. Stored as active, processed peptides in large granules within the granular gland secretions of the skin.

Its subcellular location is the secreted. Functionally, PGLa and PGLa-H display a broad-spectrum of antibacterial activity against a range of Gram-positive and Gram-negative bacteria. PGLa also displays antifungal activity against C.albicans ATCC 14053. PGLa-H shows moderate antibacterial activity against the multidrug-resistant methicillin-resistant S.aureus (MRSA) but exhibits very little hemolytic activity. This Xenopus laevis (African clawed frog) protein is PYLa/PGLa A (pgla-a).